We begin with the raw amino-acid sequence, 274 residues long: Large ribosomal subunit protein uL2 (274 aa).

Disordered stretches follow at residues 28 to 59 and 222 to 274; these read APYA…GGHK and GAAM…RRTK. Residues 39-49 show a composition bias toward polar residues; the sequence is KSGGRNNNGRI. Positions 229–239 are enriched in basic and acidic residues; sequence DHPHGGGEGRS.

The protein belongs to the universal ribosomal protein uL2 family. Part of the 50S ribosomal subunit. Forms a bridge to the 30S subunit in the 70S ribosome.

In terms of biological role, one of the primary rRNA binding proteins. Required for association of the 30S and 50S subunits to form the 70S ribosome, for tRNA binding and peptide bond formation. It has been suggested to have peptidyltransferase activity; this is somewhat controversial. Makes several contacts with the 16S rRNA in the 70S ribosome. This Marinomonas sp. (strain MWYL1) protein is Large ribosomal subunit protein uL2.